A 199-amino-acid chain; its full sequence is Large ribosomal subunit protein mL51 (199 aa).

The transit peptide at 1-15 (MNSNSLSRFTSIVRT) directs the protein to the mitochondrion.

The protein belongs to the mitochondrion-specific ribosomal protein mL51 family. As to quaternary structure, component of the mitochondrial ribosome large subunit (39S) which comprises a 16S rRNA and about 50 distinct proteins.

It is found in the mitochondrion. This chain is Large ribosomal subunit protein mL51 (mrpl-51), found in Caenorhabditis elegans.